Consider the following 275-residue polypeptide: tRNA uridine(34) hydroxylase (275 aa).

A Rhodanese domain is found at 122–218 (SRSDVYTIDT…YFKSTQNKNS (97 aa)). Residue Cys-178 is the Cysteine persulfide intermediate of the active site.

This sequence belongs to the TrhO family.

The catalysed reaction is uridine(34) in tRNA + AH2 + O2 = 5-hydroxyuridine(34) in tRNA + A + H2O. Its function is as follows. Catalyzes oxygen-dependent 5-hydroxyuridine (ho5U) modification at position 34 in tRNAs. In Ehrlichia chaffeensis (strain ATCC CRL-10679 / Arkansas), this protein is tRNA uridine(34) hydroxylase.